Reading from the N-terminus, the 269-residue chain is Interleukin-1 beta (269 aa).

Positions 1–116 are excised as a propeptide; the sequence is MAEVPELASE…TRNNDACVHD (116 aa).

Belongs to the IL-1 family. In terms of assembly, monomer. In its precursor form, weakly interacts with full-length MEFV; the mature cytokine does not interact at all. Interacts with integrins ITGAV:ITGBV and ITGA5:ITGB1; integrin-binding is required for IL1B signaling. Interacts with cargo receptor TMED10; the interaction is direct and is required for the secretion of IL1B mature form. Interacts with HSP90AB1; the interaction facilitates cargo translocation into the ERGIC. Interacts with HSP90B1; the interaction facilitates cargo translocation into the ERGIC.

The protein localises to the cytoplasm. The protein resides in the cytosol. Its subcellular location is the secreted. It is found in the lysosome. It localises to the extracellular exosome. Functionally, potent pro-inflammatory cytokine. Initially discovered as the major endogenous pyrogen, induces prostaglandin synthesis, neutrophil influx and activation, T-cell activation and cytokine production, B-cell activation and antibody production, and fibroblast proliferation and collagen production. Promotes Th17 differentiation of T-cells. Synergizes with IL12/interleukin-12 to induce IFNG synthesis from T-helper 1 (Th1) cells. Plays a role in angiogenesis by inducing VEGF production synergistically with TNF and IL6. Involved in transduction of inflammation downstream of pyroptosis: its mature form is specifically released in the extracellular milieu by passing through the gasdermin-D (GSDMD) pore. This chain is Interleukin-1 beta (IL1B), found in Macaca nemestrina (Pig-tailed macaque).